Consider the following 142-residue polypeptide: Large ribosomal subunit protein uL11 (142 aa).

A N,N,N-trimethylalanine modification is found at Ala-2. An N6,N6,N6-trimethyllysine mark is found at Lys-4 and Lys-40.

Belongs to the universal ribosomal protein uL11 family. Part of the ribosomal stalk of the 50S ribosomal subunit. Interacts with L10 and the large rRNA to form the base of the stalk. L10 forms an elongated spine to which L12 dimers bind in a sequential fashion forming a multimeric L10(L12)X complex. One or more lysine residues are methylated.

In terms of biological role, forms part of the ribosomal stalk which helps the ribosome interact with GTP-bound translation factors. This Shigella flexneri protein is Large ribosomal subunit protein uL11.